The primary structure comprises 56 residues: Large ribosomal subunit protein bL33 (56 aa).

This sequence belongs to the bacterial ribosomal protein bL33 family.

The sequence is that of Large ribosomal subunit protein bL33 from Orientia tsutsugamushi (strain Ikeda) (Rickettsia tsutsugamushi).